Reading from the N-terminus, the 180-residue chain is MQQLKTKYNDQVRPALMQQFGYSSVMAVPRIEKIVVNEGLGSSKEDSKAIDKAAKELALITLQKPIITKAKKSISNFKLRQGMPVGIKVTLRGERMYVFLEKLINIGLPRIRDFRGINPNAFDGRGNYNLGIKEQLIFPEITYDMVDKTRGMDITIVTTAKTDEEARALLQSMGLPFRKQ.

It belongs to the universal ribosomal protein uL5 family. In terms of assembly, forms a bridge to the 30S subunit in the 70S ribosome. Part of the 50S ribosomal subunit; part of the 5S rRNA/L5/L18/L25 (CTC) subcomplex. Is known to contact the 5S rRNA, 23S rRNA and the P site tRNA.

This is one of the proteins that bind and probably mediate the attachment of the 5S RNA into the large ribosomal subunit, where it forms part of the central protuberance. In the 70S ribosome it contacts protein S13 of the 30S subunit (bridge B1b), connecting the 2 subunits; this bridge is implicated in subunit movement. Contacts the P site tRNA; the 5S rRNA and some of its associated proteins might help stabilize positioning of ribosome-bound tRNAs. This chain is Large ribosomal subunit protein uL5 (rplE), found in Deinococcus radiodurans (strain ATCC 13939 / DSM 20539 / JCM 16871 / CCUG 27074 / LMG 4051 / NBRC 15346 / NCIMB 9279 / VKM B-1422 / R1).